A 499-amino-acid polypeptide reads, in one-letter code: Glycerol kinase (499 aa).

Threonine 17 provides a ligand contact to ADP. Residues threonine 17, threonine 18, and serine 19 each coordinate ATP. Sn-glycerol 3-phosphate is bound at residue threonine 17. Residue arginine 21 participates in ADP binding. Residues arginine 87, glutamate 88, tyrosine 139, and aspartate 243 each coordinate sn-glycerol 3-phosphate. The glycerol site is built by arginine 87, glutamate 88, tyrosine 139, aspartate 243, and glutamine 244. Positions 265 and 308 each coordinate ADP. Threonine 265, glycine 308, glutamine 312, and glycine 409 together coordinate ATP. ADP contacts are provided by glycine 409 and asparagine 413.

Belongs to the FGGY kinase family.

The enzyme catalyses glycerol + ATP = sn-glycerol 3-phosphate + ADP + H(+). It participates in polyol metabolism; glycerol degradation via glycerol kinase pathway; sn-glycerol 3-phosphate from glycerol: step 1/1. Inhibited by fructose 1,6-bisphosphate (FBP). Functionally, key enzyme in the regulation of glycerol uptake and metabolism. Catalyzes the phosphorylation of glycerol to yield sn-glycerol 3-phosphate. The protein is Glycerol kinase of Pseudomonas putida (strain GB-1).